We begin with the raw amino-acid sequence, 90 residues long: SAGA-associated factor 11 (90 aa).

Residues F63–C84 form an SGF11-type zinc finger.

It belongs to the SGF11 family. Component of the 1.8 MDa SAGA transcription coactivator-HAT complex. SAGA is built of 5 distinct domains with specialized functions. Within the SAGA complex, SUS1, SGF11, SGF73 and UBP8 form an additional subcomplex of SAGA called the DUB module (deubiquitination module). Interacts directly with SGF73, SUS1 and UBP8.

It is found in the nucleus. In terms of biological role, functions as a component of the transcription regulatory histone acetylation (HAT) complex SAGA. At the promoters, SAGA is required for recruitment of the basal transcription machinery. It influences RNA polymerase II transcriptional activity through different activities such as TBP interaction and promoter selectivity, interaction with transcription activators, and chromatin modification through histone acetylation and deubiquitination. SAGA acetylates nucleosomal histone H3 to some extent (to form H3K9ac, H3K14ac, H3K18ac and H3K23ac). SAGA interacts with DNA via upstream activating sequences (UASs). Involved in transcriptional regulation of a subset of SAGA-regulated genes. Within the SAGA complex, participates in a subcomplex, that specifically deubiquitinates histones H2B. In Lodderomyces elongisporus (strain ATCC 11503 / CBS 2605 / JCM 1781 / NBRC 1676 / NRRL YB-4239) (Yeast), this protein is SAGA-associated factor 11.